The sequence spans 486 residues: Bifunctional protein HldE (486 aa).

Residues 1 to 331 are ribokinase; that stretch reads MSTNVADLLH…NALTAESVPV (331 aa). Residue 207 to 210 participates in ATP binding; sequence NLGE. The active site involves D276. The tract at residues 358–486 is cytidylyltransferase; that stretch reads VTNGCFDLLH…STTKLIEKGH (129 aa).

The protein in the N-terminal section; belongs to the carbohydrate kinase PfkB family. This sequence in the C-terminal section; belongs to the cytidylyltransferase family. As to quaternary structure, homodimer.

The catalysed reaction is D-glycero-beta-D-manno-heptose 7-phosphate + ATP = D-glycero-beta-D-manno-heptose 1,7-bisphosphate + ADP + H(+). It catalyses the reaction D-glycero-beta-D-manno-heptose 1-phosphate + ATP + H(+) = ADP-D-glycero-beta-D-manno-heptose + diphosphate. It participates in nucleotide-sugar biosynthesis; ADP-L-glycero-beta-D-manno-heptose biosynthesis; ADP-L-glycero-beta-D-manno-heptose from D-glycero-beta-D-manno-heptose 7-phosphate: step 1/4. Its pathway is nucleotide-sugar biosynthesis; ADP-L-glycero-beta-D-manno-heptose biosynthesis; ADP-L-glycero-beta-D-manno-heptose from D-glycero-beta-D-manno-heptose 7-phosphate: step 3/4. Functionally, catalyzes the phosphorylation of D-glycero-D-manno-heptose 7-phosphate at the C-1 position to selectively form D-glycero-beta-D-manno-heptose-1,7-bisphosphate. Catalyzes the ADP transfer from ATP to D-glycero-beta-D-manno-heptose 1-phosphate, yielding ADP-D-glycero-beta-D-manno-heptose. This chain is Bifunctional protein HldE, found in Koribacter versatilis (strain Ellin345).